A 210-amino-acid polypeptide reads, in one-letter code: Large ribosomal subunit protein uL3 (210 aa).

The disordered stretch occupies residues 133–152 (ATHGNSLSHRVHGSTGQNQT). Position 151 is an N5-methylglutamine (Gln-151).

It belongs to the universal ribosomal protein uL3 family. Part of the 50S ribosomal subunit. Forms a cluster with proteins L14 and L19. Methylated by PrmB.

Its function is as follows. One of the primary rRNA binding proteins, it binds directly near the 3'-end of the 23S rRNA, where it nucleates assembly of the 50S subunit. The sequence is that of Large ribosomal subunit protein uL3 from Francisella tularensis subsp. holarctica (strain FTNF002-00 / FTA).